We begin with the raw amino-acid sequence, 169 residues long: Dihydrofolate reductase type 8 (169 aa).

In terms of domain architecture, DHFR spans 3–169 (ELHAILAATA…FTYRKKELTE (167 aa)).

This sequence belongs to the dihydrofolate reductase family. As to quaternary structure, homodimer.

It carries out the reaction (6S)-5,6,7,8-tetrahydrofolate + NADP(+) = 7,8-dihydrofolate + NADPH + H(+). The protein operates within cofactor biosynthesis; tetrahydrofolate biosynthesis; 5,6,7,8-tetrahydrofolate from 7,8-dihydrofolate: step 1/1. In terms of biological role, key enzyme in folate metabolism. Catalyzes an essential reaction for de novo glycine and purine synthesis, and for DNA precursor synthesis. The polypeptide is Dihydrofolate reductase type 8 (dhfrVIII) (Escherichia coli).